A 132-amino-acid chain; its full sequence is DNA-directed RNA polymerase subunit omega (132 aa).

This sequence belongs to the RNA polymerase subunit omega family. In terms of assembly, the RNAP catalytic core consists of 2 alpha, 1 beta, 1 beta' and 1 omega subunit. When a sigma factor is associated with the core the holoenzyme is formed, which can initiate transcription.

The catalysed reaction is RNA(n) + a ribonucleoside 5'-triphosphate = RNA(n+1) + diphosphate. Functionally, promotes RNA polymerase assembly. Latches the N- and C-terminal regions of the beta' subunit thereby facilitating its interaction with the beta and alpha subunits. This Ehrlichia ruminantium (strain Welgevonden) protein is DNA-directed RNA polymerase subunit omega.